Consider the following 341-residue polypeptide: Tetraacyldisaccharide 4'-kinase (341 aa).

65–72 (TVGGSGKT) provides a ligand contact to ATP.

Belongs to the LpxK family.

The catalysed reaction is a lipid A disaccharide + ATP = a lipid IVA + ADP + H(+). It functions in the pathway glycolipid biosynthesis; lipid IV(A) biosynthesis; lipid IV(A) from (3R)-3-hydroxytetradecanoyl-[acyl-carrier-protein] and UDP-N-acetyl-alpha-D-glucosamine: step 6/6. Transfers the gamma-phosphate of ATP to the 4'-position of a tetraacyldisaccharide 1-phosphate intermediate (termed DS-1-P) to form tetraacyldisaccharide 1,4'-bis-phosphate (lipid IVA). In Shewanella woodyi (strain ATCC 51908 / MS32), this protein is Tetraacyldisaccharide 4'-kinase.